A 274-amino-acid chain; its full sequence is RsbT co-antagonist protein RsbRA (274 aa).

One can recognise an STAS domain in the interval 150-265 (SAPLIPVFEN…KGIQTALEMT (116 aa)). T171 and T205 each carry phosphothreonine.

As to quaternary structure, interacts with RsbRB and RsbS in the stressosome. The stressosome probably also contains RsbRC and RsbRD. In terms of processing, phosphorylated by RsbT. This threonine phosphorylation abrogates the ability of RsbRA to stimulate RsbT in vitro.

Acts as a positive regulator of sigma-B activity in response to salt and heat stress by stimulating the activity of the RsbT kinase toward RsbS in vitro. In terms of biological role, one of 4 functionally non-identical RsbR paralogs, it functions in the environmental signaling branch of the general stress response. Its function is as follows. Negative regulator of sigma-B activity. Non-phosphorylated RsbS binds to RsbT, preventing its association with RsbU. Requires any one of RsbRA, RsbRB, RsbRC or RsbRD to sequester RsbT. When RsbS and the RsbR paralog(s) are phosphorylated, they release RsbT, which can then bind and activate RsbU. The protein is RsbT co-antagonist protein RsbRA (rsbRA) of Bacillus subtilis (strain 168).